Consider the following 264-residue polypeptide: Glyceraldehyde-3-phosphate dehydrogenase (264 aa).

Residues Arg45 and Thr93 each contribute to the NAD(+) site. D-glyceraldehyde 3-phosphate contacts are provided by residues 123 to 125 and Thr154; that span reads SCT. The active-site Nucleophile is the Cys124. Asn155 is an NAD(+) binding site. Residues Arg169, 182–183, and Arg205 contribute to the D-glyceraldehyde 3-phosphate site; that span reads TG. Positions 245-264 are disordered; sequence GILGYTEDPXVSSDXKGNSH.

It belongs to the glyceraldehyde-3-phosphate dehydrogenase family. In terms of assembly, homotetramer.

The protein localises to the cytoplasm. It catalyses the reaction D-glyceraldehyde 3-phosphate + phosphate + NAD(+) = (2R)-3-phospho-glyceroyl phosphate + NADH + H(+). The protein operates within carbohydrate degradation; glycolysis; pyruvate from D-glyceraldehyde 3-phosphate: step 1/5. In terms of biological role, catalyzes the oxidative phosphorylation of glyceraldehyde 3-phosphate (G3P) to 1,3-bisphosphoglycerate (BPG) using the cofactor NAD. The first reaction step involves the formation of a hemiacetal intermediate between G3P and a cysteine residue, and this hemiacetal intermediate is then oxidized to a thioester, with concomitant reduction of NAD to NADH. The reduced NADH is then exchanged with the second NAD, and the thioester is attacked by a nucleophilic inorganic phosphate to produce BPG. The chain is Glyceraldehyde-3-phosphate dehydrogenase (gap) from Borrelia hermsii.